A 270-amino-acid chain; its full sequence is DNA repair protein RecO (270 aa).

It belongs to the RecO family.

Functionally, involved in DNA repair and RecF pathway recombination. The protein is DNA repair protein RecO of Synechococcus sp. (strain WH7803).